A 145-amino-acid polypeptide reads, in one-letter code: Ribosomal RNA large subunit methyltransferase H (145 aa).

S-adenosyl-L-methionine contacts are provided by residues Leu-68, Gly-95, and 113–118 (FSKMTF).

It belongs to the RNA methyltransferase RlmH family. As to quaternary structure, homodimer.

It is found in the cytoplasm. The catalysed reaction is pseudouridine(1915) in 23S rRNA + S-adenosyl-L-methionine = N(3)-methylpseudouridine(1915) in 23S rRNA + S-adenosyl-L-homocysteine + H(+). In terms of biological role, specifically methylates the pseudouridine at position 1915 (m3Psi1915) in 23S rRNA. In Mycoplasmopsis pulmonis (strain UAB CTIP) (Mycoplasma pulmonis), this protein is Ribosomal RNA large subunit methyltransferase H.